We begin with the raw amino-acid sequence, 77 residues long: Conotoxin PnMEKL-04 (77 aa).

An N-terminal signal peptide occupies residues 1 to 19 (MEKLTILLLVAAVLMSTQA). Positions 20 to 45 (LPQGGGENRLKENIKFLLKRKTAADR) are excised as a propeptide. 3 cysteine pairs are disulfide-bonded: cysteine 51–cysteine 65, cysteine 58–cysteine 69, and cysteine 64–cysteine 73.

This sequence belongs to the conotoxin O2 superfamily. Expressed by the venom duct.

Its subcellular location is the secreted. This is Conotoxin PnMEKL-04 from Conus pennaceus (Feathered cone).